The primary structure comprises 193 residues: Probable nicotinate-nucleotide adenylyltransferase (193 aa).

Belongs to the NadD family.

The enzyme catalyses nicotinate beta-D-ribonucleotide + ATP + H(+) = deamido-NAD(+) + diphosphate. Its pathway is cofactor biosynthesis; NAD(+) biosynthesis; deamido-NAD(+) from nicotinate D-ribonucleotide: step 1/1. Its function is as follows. Catalyzes the reversible adenylation of nicotinate mononucleotide (NaMN) to nicotinic acid adenine dinucleotide (NaAD). This Chlorobium phaeovibrioides (strain DSM 265 / 1930) (Prosthecochloris vibrioformis (strain DSM 265)) protein is Probable nicotinate-nucleotide adenylyltransferase.